We begin with the raw amino-acid sequence, 198 residues long: Peptidyl-tRNA hydrolase (198 aa).

Position 15 (tyrosine 15) interacts with tRNA. The active-site Proton acceptor is histidine 20. TRNA is bound by residues phenylalanine 66, asparagine 68, and asparagine 114.

The protein belongs to the PTH family. As to quaternary structure, monomer.

It is found in the cytoplasm. It carries out the reaction an N-acyl-L-alpha-aminoacyl-tRNA + H2O = an N-acyl-L-amino acid + a tRNA + H(+). Functionally, hydrolyzes ribosome-free peptidyl-tRNAs (with 1 or more amino acids incorporated), which drop off the ribosome during protein synthesis, or as a result of ribosome stalling. In terms of biological role, catalyzes the release of premature peptidyl moieties from peptidyl-tRNA molecules trapped in stalled 50S ribosomal subunits, and thus maintains levels of free tRNAs and 50S ribosomes. The chain is Peptidyl-tRNA hydrolase from Cupriavidus necator (strain ATCC 17699 / DSM 428 / KCTC 22496 / NCIMB 10442 / H16 / Stanier 337) (Ralstonia eutropha).